A 707-amino-acid polypeptide reads, in one-letter code: Anaerobic ribonucleoside-triphosphate reductase (707 aa).

Positions 4 to 95 constitute an ATP-cone domain; the sequence is FGVIKRDGSR…EYRHDRDLAR (92 aa). Positions 584–707 constitute a Glycine radical domain; it reads KKVNPYDKLD…EEVKRRVKHL (124 aa). Zn(2+)-binding residues include Cys645, Cys648, Cys663, and Cys666. At Gly682 the chain carries Glycine radical.

It belongs to the anaerobic ribonucleoside-triphosphate reductase family. Forms a tetramer composed of two NrdD and two NrdG subunits.

The catalysed reaction is a ribonucleoside 5'-triphosphate + formate + H(+) = a 2'-deoxyribonucleoside 5'-triphosphate + CO2 + H2O. Activated under anaerobic conditions by NrdG, a tightly associated activase. Activation involves the formation of a glycyl radical at Gly-682. In terms of biological role, catalyzes the conversion of ribonucleotides into deoxyribonucleotides, which are required for DNA synthesis and repair. The protein is Anaerobic ribonucleoside-triphosphate reductase (nrdD) of Haemophilus influenzae (strain ATCC 51907 / DSM 11121 / KW20 / Rd).